A 58-amino-acid polypeptide reads, in one-letter code: Small ribosomal subunit protein bS21 (58 aa).

A compositionally biased stretch (basic and acidic residues) spans 32-42 (VRKREHYEKPS). A disordered region spans residues 32–58 (VRKREHYEKPSVKKKKKSEAARKRKFK). Positions 43–58 (VKKKKKSEAARKRKFK) are enriched in basic residues.

This sequence belongs to the bacterial ribosomal protein bS21 family.

The chain is Small ribosomal subunit protein bS21 from Clostridium botulinum (strain Okra / Type B1).